Reading from the N-terminus, the 397-residue chain is MSESVHTNPSLYSKGMLAVICAQFLSAFGDNALLFATLALMKQLYYPEWSQPVLQMLFVGAYILFAPFVGQFADSFAKGRVMMVANGLKLLGAGCICFGVNPFIGYTLVGIGAAAYSPAKYGILGELTTGDKLVKANGLMESSTIAAILLGSMAGGILADWHVLAALIVCALVYGGAVVANLWIPRLPAARPGQSWRFKPMTHSFFSACRTLWRNGETRFSLMGTSLFWGAGVTLRFLLVIWVPVALGITSNAMPTYLNAMVAVGIVLGAGAAAKLVTLETVSRCMPAGILIGIAVIAFAVQQSLLPAFGLLLLLGVFGGFFIVPLNALLQERGKHSVGAGNAIAVQNLGENVAMLLMLGLYSLAVSVGVPPVAVGIGFGAVFAVAIAALWVWGRRK.

The next 11 helical transmembrane spans lie at 16–36 (MLAV…LLFA), 53–73 (VLQM…GQFA), 91–111 (LGAG…LVGI), 139–159 (LMES…GILA), 164–184 (LAAL…NLWI), 227–247 (LFWG…PVAL), 253–273 (AMPT…AGAA), 281–301 (TVSR…AFAV), 305–325 (LLPA…FIVP), 352–372 (NVAM…GVPP), and 373–393 (VAVG…LWVW).

It belongs to the major facilitator superfamily. LplT (TC 2.A.1.42) family.

The protein localises to the cell inner membrane. Functionally, catalyzes the facilitated diffusion of 2-acyl-glycero-3-phosphoethanolamine (2-acyl-GPE) into the cell. In Klebsiella pneumoniae subsp. pneumoniae (strain ATCC 700721 / MGH 78578), this protein is Lysophospholipid transporter LplT.